A 204-amino-acid polypeptide reads, in one-letter code: Anthranilate synthase component 2 (204 aa).

The region spanning Arg-13–Arg-204 is the Glutamine amidotransferase type-1 domain. Residue Gly-64–Cys-66 participates in L-glutamine binding. Residue Cys-91 is the Nucleophile; for GATase activity of the active site. L-glutamine is bound by residues Gln-95 and Ser-141–Leu-142. Active-site for GATase activity residues include His-181 and Glu-183.

Heterotetramer consisting of two non-identical subunits: a beta subunit (TrpG) and a large alpha subunit (TrpE).

It carries out the reaction chorismate + L-glutamine = anthranilate + pyruvate + L-glutamate + H(+). It functions in the pathway amino-acid biosynthesis; L-tryptophan biosynthesis; L-tryptophan from chorismate: step 1/5. Its function is as follows. Part of a heterotetrameric complex that catalyzes the two-step biosynthesis of anthranilate, an intermediate in the biosynthesis of L-tryptophan. In the first step, the glutamine-binding beta subunit (TrpG) of anthranilate synthase (AS) provides the glutamine amidotransferase activity which generates ammonia as a substrate that, along with chorismate, is used in the second step, catalyzed by the large alpha subunit of AS (TrpE) to produce anthranilate. In the absence of TrpG, TrpE can synthesize anthranilate directly from chorismate and high concentrations of ammonia. This is Anthranilate synthase component 2 (trpG) from Thermus thermophilus (strain ATCC 27634 / DSM 579 / HB8).